A 178-amino-acid polypeptide reads, in one-letter code: Transcription factor E (178 aa).

One can recognise an HTH TFE/IIEalpha-type domain in the interval 5 to 89; it reads AEELILSLAK…YWKVNIDQIN (85 aa).

The protein belongs to the TFE family. As to quaternary structure, monomer. Interaction with RNA polymerase subunits RpoF and RpoE is necessary for Tfe stimulatory transcription activity. Able to interact with Tbp and RNA polymerase in the absence of DNA promoter. Interacts both with the preinitiation and elongation complexes.

Transcription factor that plays a role in the activation of archaeal genes transcribed by RNA polymerase. Facilitates transcription initiation by enhancing TATA-box recognition by TATA-box-binding protein (Tbp), and transcription factor B (Tfb) and RNA polymerase recruitment. Not absolutely required for transcription in vitro, but particularly important in cases where Tbp or Tfb function is not optimal. It dynamically alters the nucleic acid-binding properties of RNA polymerases by stabilizing the initiation complex and destabilizing elongation complexes. Seems to translocate with the RNA polymerase following initiation and acts by binding to the non template strand of the transcription bubble in elongation complexes. The protein is Transcription factor E of Sulfurisphaera tokodaii (strain DSM 16993 / JCM 10545 / NBRC 100140 / 7) (Sulfolobus tokodaii).